The chain runs to 315 residues: Acetyl-coenzyme A carboxylase carboxyl transferase subunit alpha (315 aa).

One can recognise a CoA carboxyltransferase C-terminal domain in the interval 39–292; that stretch reads LEDKSAKLLR…GDALEQELNG (254 aa).

Belongs to the AccA family. In terms of assembly, acetyl-CoA carboxylase is a heterohexamer composed of biotin carboxyl carrier protein (AccB), biotin carboxylase (AccC) and two subunits each of ACCase subunit alpha (AccA) and ACCase subunit beta (AccD).

It localises to the cytoplasm. The enzyme catalyses N(6)-carboxybiotinyl-L-lysyl-[protein] + acetyl-CoA = N(6)-biotinyl-L-lysyl-[protein] + malonyl-CoA. It participates in lipid metabolism; malonyl-CoA biosynthesis; malonyl-CoA from acetyl-CoA: step 1/1. Functionally, component of the acetyl coenzyme A carboxylase (ACC) complex. First, biotin carboxylase catalyzes the carboxylation of biotin on its carrier protein (BCCP) and then the CO(2) group is transferred by the carboxyltransferase to acetyl-CoA to form malonyl-CoA. The protein is Acetyl-coenzyme A carboxylase carboxyl transferase subunit alpha of Sphingopyxis alaskensis (strain DSM 13593 / LMG 18877 / RB2256) (Sphingomonas alaskensis).